The sequence spans 503 residues: Cytochrome P450 11B1, mitochondrial (503 aa).

The transit peptide at 1–24 (MALRAKAEVCMAVPWLSLQRAQAL) directs the protein to the mitochondrion. Cys-450 is a binding site for heme.

It belongs to the cytochrome P450 family. Heme serves as cofactor. As to expression, expressed in the zona fasciculata/reticularis of the adrenal cortex.

The protein localises to the mitochondrion inner membrane. The enzyme catalyses a steroid + 2 reduced [adrenodoxin] + O2 + 2 H(+) = an 11beta-hydroxysteroid + 2 oxidized [adrenodoxin] + H2O. It catalyses the reaction 11-deoxycortisol + 2 reduced [adrenodoxin] + O2 + 2 H(+) = cortisol + 2 oxidized [adrenodoxin] + H2O. The catalysed reaction is 21-hydroxyprogesterone + 2 reduced [adrenodoxin] + O2 + 2 H(+) = corticosterone + 2 oxidized [adrenodoxin] + H2O. It participates in steroid biosynthesis; glucocorticoid biosynthesis. Its pathway is steroid hormone biosynthesis. Functionally, a cytochrome P450 monooxygenase involved in the biosynthesis of adrenal corticoids. Catalyzes a variety of reactions that are essential for many species, including detoxification, defense, and the formation of endogenous chemicals like steroid hormones. Steroid 11beta, 18- and 19-hydroxylase with preferred regioselectivity at 11beta, then 18, and lastly 19. Catalyzes the hydroxylation of 11-deoxycortisol and 11-deoxycorticosterone (21-hydroxyprogesterone) at 11beta position, yielding cortisol or corticosterone, respectively, but cannot produce aldosterone. Mechanistically, uses molecular oxygen inserting one oxygen atom into a substrate for hydroxylation and reducing the second into a water molecule. Two electrons are provided by NADPH via a two-protein mitochondrial transfer system comprising flavoprotein FDXR (adrenodoxin/ferredoxin reductase) and nonheme iron-sulfur protein FDX1 or FDX2 (adrenodoxin/ferredoxin). Due to its lack of 18-oxidation activity, it is incapable of generating aldosterone. Could also be involved in the androgen metabolic pathway. This chain is Cytochrome P450 11B1, mitochondrial, found in Homo sapiens (Human).